The chain runs to 218 residues: Recombination protein RecR (218 aa).

Residues 56 to 71 form a C4-type zinc finger; sequence CRICCNISREEVCRIC. The region spanning 79-195 is the Toprim domain; the sequence is GTICVVEEPK…VVSRLASGMP (117 aa).

The protein belongs to the RecR family.

May play a role in DNA repair. It seems to be involved in an RecBC-independent recombinational process of DNA repair. It may act with RecF and RecO. This chain is Recombination protein RecR, found in Corynebacterium glutamicum (strain R).